A 479-amino-acid polypeptide reads, in one-letter code: Wax ester synthase/diacylglycerol acyltransferase 2 (479 aa).

Residues 1–182 are Cytoplasmic-facing; sequence MAIERQVTEA…VAPKKNKAKN (182 aa). Histidine 144 serves as the catalytic Proton acceptor. Residues 183-199 traverse the membrane as a helical segment; that stretch reads VCFSLVAWLWFIVRLMF. At 200–479 the chain is on the lumenal side; the sequence is HTCVEVIKSI…PKKVFHASKV (280 aa). N-linked (GlcNAc...) asparagine glycosylation occurs at asparagine 253.

The protein in the N-terminal section; belongs to the long-chain O-acyltransferase family. As to expression, mostly expressed in flowers and siliques and barely in roots and stems.

It localises to the cell membrane. The protein resides in the endoplasmic reticulum membrane. The catalysed reaction is an acyl-CoA + a 1,2-diacyl-sn-glycerol = a triacyl-sn-glycerol + CoA. The enzyme catalyses a long chain fatty alcohol + a fatty acyl-CoA = a wax ester + CoA. Its pathway is glycerolipid metabolism; triacylglycerol biosynthesis. It functions in the pathway lipid metabolism. Its function is as follows. Bifunctional wax ester synthase/diacylglycerol acyltransferase. Involved in cuticular wax biosynthesis. The sequence is that of Wax ester synthase/diacylglycerol acyltransferase 2 from Arabidopsis thaliana (Mouse-ear cress).